We begin with the raw amino-acid sequence, 486 residues long: Betaine aldehyde dehydrogenase (486 aa).

K(+) contacts are provided by Thr-23 and Asp-90. 147–149 is a binding site for NAD(+); the sequence is GAW. Lys-159 (charge relay system) is an active-site residue. NAD(+) contacts are provided by residues 173 to 176 and 226 to 229; these read KPSE and ESGT. Leu-241 provides a ligand contact to K(+). Residue Glu-247 is the Proton acceptor of the active site. Gly-249, Cys-281, and Glu-382 together coordinate NAD(+). The active-site Nucleophile is Cys-281. Cys-281 carries the post-translational modification Cysteine sulfenic acid (-SOH). K(+) contacts are provided by Lys-452 and Gly-455. Glu-459 functions as the Charge relay system in the catalytic mechanism.

The protein belongs to the aldehyde dehydrogenase family. In terms of assembly, dimer of dimers. K(+) is required as a cofactor.

The catalysed reaction is betaine aldehyde + NAD(+) + H2O = glycine betaine + NADH + 2 H(+). It participates in amine and polyamine biosynthesis; betaine biosynthesis via choline pathway; betaine from betaine aldehyde: step 1/1. Functionally, involved in the biosynthesis of the osmoprotectant glycine betaine. Catalyzes the irreversible oxidation of betaine aldehyde to the corresponding acid. This chain is Betaine aldehyde dehydrogenase, found in Vibrio vulnificus (strain CMCP6).